Reading from the N-terminus, the 329-residue chain is Replication factor C small subunit 1 (329 aa).

ATP is bound at residue G44 to T51.

It belongs to the activator 1 small subunits family. RfcS subfamily. In terms of assembly, heteromultimer composed of small subunits (RfcS) and large subunits (RfcL).

Part of the RFC clamp loader complex which loads the PCNA sliding clamp onto DNA. The protein is Replication factor C small subunit 1 of Pyrobaculum islandicum (strain DSM 4184 / JCM 9189 / GEO3).